The chain runs to 294 residues: 1D-myo-inositol 2-acetamido-2-deoxy-alpha-D-glucopyranoside deacetylase (294 aa).

Zn(2+)-binding residues include H15, D18, and H150.

The protein belongs to the MshB deacetylase family. The cofactor is Zn(2+).

The enzyme catalyses 1D-myo-inositol 2-acetamido-2-deoxy-alpha-D-glucopyranoside + H2O = 1D-myo-inositol 2-amino-2-deoxy-alpha-D-glucopyranoside + acetate. Its function is as follows. Catalyzes the deacetylation of 1D-myo-inositol 2-acetamido-2-deoxy-alpha-D-glucopyranoside (GlcNAc-Ins) in the mycothiol biosynthesis pathway. This is 1D-myo-inositol 2-acetamido-2-deoxy-alpha-D-glucopyranoside deacetylase from Streptomyces avermitilis (strain ATCC 31267 / DSM 46492 / JCM 5070 / NBRC 14893 / NCIMB 12804 / NRRL 8165 / MA-4680).